We begin with the raw amino-acid sequence, 83 residues long: Small ribosomal subunit protein bS16 (83 aa).

The protein belongs to the bacterial ribosomal protein bS16 family.

The chain is Small ribosomal subunit protein bS16 from Pseudomonas fluorescens (strain Pf0-1).